The chain runs to 198 residues: Thioredoxin reductase-like selenoprotein T homolog CG3887 (198 aa).

The first 25 residues, 1 to 25 (MERLTGRNVALLVLCLCAGYALVFA), serve as a signal peptide directing secretion. A disulfide bond links C49 and C52.

The protein belongs to the SelWTH family. SELT subfamily.

It catalyses the reaction [thioredoxin]-dithiol + NADP(+) = [thioredoxin]-disulfide + NADPH + H(+). Functionally, probably has thioredoxin reductase-like oxidoreductase activity. This chain is Thioredoxin reductase-like selenoprotein T homolog CG3887, found in Drosophila melanogaster (Fruit fly).